The chain runs to 62 residues: Pelophylaxin-4 (62 aa).

Positions M1–C22 are cleaved as a signal peptide. Residues E23–Q45 constitute a propeptide that is removed on maturation. L60 carries the leucine amide modification. Residue G61 is a propeptide.

As to expression, expressed by the skin glands.

Its subcellular location is the secreted. Antimicrobial peptide. This is Pelophylaxin-4 from Pelophylax fukienensis (Fukien gold-striped pond frog).